Reading from the N-terminus, the 220-residue chain is Cytidylate kinase (220 aa).

An ATP-binding site is contributed by 10–18 (GPASSGKST).

The protein belongs to the cytidylate kinase family. Type 1 subfamily.

Its subcellular location is the cytoplasm. The enzyme catalyses CMP + ATP = CDP + ADP. The catalysed reaction is dCMP + ATP = dCDP + ADP. In Lactococcus lactis subsp. cremoris (strain SK11), this protein is Cytidylate kinase.